The following is a 503-amino-acid chain: ATP synthase subunit alpha (503 aa).

170-177 (GDRQTGKT) contacts ATP.

It belongs to the ATPase alpha/beta chains family. F-type ATPases have 2 components, CF(1) - the catalytic core - and CF(0) - the membrane proton channel. CF(1) has five subunits: alpha(3), beta(3), gamma(1), delta(1), epsilon(1). CF(0) has three main subunits: a(1), b(2) and c(9-12). The alpha and beta chains form an alternating ring which encloses part of the gamma chain. CF(1) is attached to CF(0) by a central stalk formed by the gamma and epsilon chains, while a peripheral stalk is formed by the delta and b chains.

The protein localises to the cell inner membrane. The enzyme catalyses ATP + H2O + 4 H(+)(in) = ADP + phosphate + 5 H(+)(out). Its function is as follows. Produces ATP from ADP in the presence of a proton gradient across the membrane. The alpha chain is a regulatory subunit. The sequence is that of ATP synthase subunit alpha from Thermotoga maritima (strain ATCC 43589 / DSM 3109 / JCM 10099 / NBRC 100826 / MSB8).